The chain runs to 205 residues: Outer-membrane lipoprotein LolB (205 aa).

Positions methionine 1–glycine 17 are cleaved as a signal peptide. Cysteine 18 is lipidated: N-palmitoyl cysteine. Residue cysteine 18 is the site of S-diacylglycerol cysteine attachment.

It belongs to the LolB family. As to quaternary structure, monomer.

It is found in the cell outer membrane. Its function is as follows. Plays a critical role in the incorporation of lipoproteins in the outer membrane after they are released by the LolA protein. The protein is Outer-membrane lipoprotein LolB of Pseudomonas syringae pv. syringae (strain B728a).